Consider the following 567-residue polypeptide: MPASDRTSETGDVEKVTAAETPKEVPASNAAESTALTGLPLYTVLVGLGLALFLGAMDMAMLGTAVPSITSTFHTTADIGWYGAAYPLTMSSIQLLAGKIYAQFPQKLVFLVFFGLFMLGSLLCGVAVNSPMFIVGRATAGAGAAGVLSGTLAIVSAVVPLDKQSLILGLMMSLVGTAVVLGPVISGLLTDHSTWRWCFYLNLPCGGVTLLALILFFRPPKRPTRTTPLSIPELIKKLDLAGCLGFIPAVVMLLLALQWGGDGSKEHAWNSATIIGLFCGAGVSLILFLIWEHYQGDDAMLPLKFFRDLTIIASCLYGFALLGGYVVVGYFLPEWFQIIKGANPQSSAVMLLPNVITNFISKAVIGVIVNKTGYFNPWLFFGAAVLAIGSGLETNFHPSTPRPNWIGYQILQGAALGIIQAPTLGVQVALAKQKHLIPVALSLVIFFQYFGSSIMLSISLTIFQNLLRPGLVSKAGMTEAQVQQYVAAGNSEVRELTAQIDPSRLGVVLEVYNDAIAGVMWLSTAAALFGFLVSFGFPWKSLKAQTEENKKEAAEEEEEVKVAAVEA.

Residues 1 to 23 (MPASDRTSETGDVEKVTAAETPK) are compositionally biased toward basic and acidic residues. The disordered stretch occupies residues 1 to 24 (MPASDRTSETGDVEKVTAAETPKE). Transmembrane regions (helical) follow at residues 35–55 (ALTG…LFLG), 77–97 (ADIG…QLLA), 108–128 (LVFL…GVAV), 141–161 (GAGA…VVPL), 165–185 (SLIL…GPVI), 197–217 (WCFY…ILFF), 240–260 (LAGC…LQWG), 271–291 (SATI…FLIW), 311–331 (IIAS…VGYF), and 349–369 (VMLL…GVIV). N-linked (GlcNAc...) asparagine glycosylation is present at asparagine 370. The next 4 helical transmembrane spans lie at 372–392 (TGYF…GSGL), 410–430 (ILQG…QVAL), 436–456 (LIPV…SIML), and 515–535 (AIAG…LVSF). The interval 547–567 (EENKKEAAEEEEEVKVAAVEA) is disordered.

It belongs to the major facilitator superfamily. TCR/Tet family.

The protein localises to the cell membrane. Functionally, MFS-type transporter; part of the gene cluster that mediates the biosynthesis of oxaleimides, cytotoxic compounds containing an unusual disubstituted succinimide moiety. The protein is MFS-type transporter poxA of Penicillium oxalicum (strain 114-2 / CGMCC 5302) (Penicillium decumbens).